The sequence spans 331 residues: Putative phosphoribosylaminoimidazole-succinocarboxamide synthase (331 aa).

It belongs to the SAICAR synthetase family. Highly divergent.

The catalysed reaction is 5-amino-1-(5-phospho-D-ribosyl)imidazole-4-carboxylate + L-aspartate + ATP = (2S)-2-[5-amino-1-(5-phospho-beta-D-ribosyl)imidazole-4-carboxamido]succinate + ADP + phosphate + 2 H(+). It functions in the pathway purine metabolism; IMP biosynthesis via de novo pathway; 5-amino-1-(5-phospho-D-ribosyl)imidazole-4-carboxamide from 5-amino-1-(5-phospho-D-ribosyl)imidazole-4-carboxylate: step 1/2. This Archaeoglobus fulgidus (strain ATCC 49558 / DSM 4304 / JCM 9628 / NBRC 100126 / VC-16) protein is Putative phosphoribosylaminoimidazole-succinocarboxamide synthase (purC).